The sequence spans 296 residues: Sulfotransferase 1C2 (296 aa).

Residue 49–54 (KSGTTW) participates in 3'-phosphoadenylyl sulfate binding. 107 to 109 (RTH) is a substrate binding site. His109 acts as the Proton acceptor in catalysis. 3'-phosphoadenylyl sulfate-binding positions include Arg131, Ser139, Tyr194, and 228–233 (TSFEKM). At Ser139 the chain carries Phosphoserine. Ser254 bears the Phosphoserine mark. 256-260 (FMRKG) is a binding site for 3'-phosphoadenylyl sulfate.

The protein belongs to the sulfotransferase 1 family. As to expression, found in gastrointestinal tract tissues, liver and kidney.

It localises to the cytoplasm. The protein resides in the lysosome. Its subcellular location is the mitochondrion. It carries out the reaction a phenol + 3'-phosphoadenylyl sulfate = an aryl sulfate + adenosine 3',5'-bisphosphate + H(+). The catalysed reaction is cholesterol + 3'-phosphoadenylyl sulfate = cholesterol sulfate + adenosine 3',5'-bisphosphate + H(+). Sulfotransferase that utilizes 3'-phospho-5'-adenylyl sulfate (PAPS) to catalyze the sulfate conjugation of phenolic compounds. Does not transfer sulfate to steroids, dopamine, acetaminophen, or alpha-naphthol. Except in mitochondria, where it can add sulfate to cholesterol producing cholesterol sulfate, which alters mitochondrial membrane organization, and impacts protein complex mobility increasing state-III respiration, thereby modulating mitochondrial respiration. Catalyzes the sulfation of the carcinogenic N-hydroxy-2-acetylaminofluorene leading to highly reactive intermediates capable of forming DNA adducts, potentially resulting in mutagenesis. The polypeptide is Sulfotransferase 1C2 (SULT1C2) (Oryctolagus cuniculus (Rabbit)).